Reading from the N-terminus, the 199-residue chain is Recombination protein RecR (199 aa).

The C4-type zinc-finger motif lies at 56 to 71; sequence CAICGNVSEKETCGIC. The Toprim domain occupies 79-174; that stretch reads ATICVVEEAK…RVTRLASGLP (96 aa).

It belongs to the RecR family.

Functionally, may play a role in DNA repair. It seems to be involved in an RecBC-independent recombinational process of DNA repair. It may act with RecF and RecO. In Clavibacter michiganensis subsp. michiganensis (strain NCPPB 382), this protein is Recombination protein RecR.